We begin with the raw amino-acid sequence, 53 residues long: MMDDLQDVSRLREAYQFYQKAKQDEDSIVCGCLNDAYEWLFSELKALFDEEEE.

This is an uncharacterized protein from Haemophilus influenzae (strain ATCC 51907 / DSM 11121 / KW20 / Rd).